The sequence spans 221 residues: Growth hormone-releasing peptides (221 aa).

An N-terminal signal peptide occupies residues M1–F25. Positions A26–R95 are excised as a propeptide. At F107 the chain carries Phenylalanine amide. A propeptide spanning residues T110–K127 is cleaved from the precursor. Residues F136, F156, and F176 each carry the phenylalanine amide modification. A propeptide spanning residues T179–M221 is cleaved from the precursor.

Belongs to the FARP (FMRFamide related peptide) family. In terms of tissue distribution, observed in the suprachiasmatic nucleus and in several telencephalic and diencephalic regions.

The protein localises to the secreted. Functionally, primary role is to release GH from the pituitary. May act as an endogenous ligand in the bullfrog hypothalamo-hypophysial system. This Aquarana catesbeiana (American bullfrog) protein is Growth hormone-releasing peptides.